The chain runs to 1054 residues: SMC5-SMC6 complex localization factor protein 1 (1054 aa).

BRCT domains are found at residues 2–80 (EDSA…AKSG) and 121–199 (PGAF…LLEK). Positions 283-303 (RHGLENQKETKKKDKNIQRSY) are disordered. The segment covering 284–299 (HGLENQKETKKKDKNI) has biased composition (basic and acidic residues). The NSE5-like domain; mediates interaction with SLF2 stretch occupies residues 407 to 1054 (PRGILNLIEN…MMCQSITELS (648 aa)). ANK repeat units lie at residues 802-832 (KGET…DINV), 836-865 (AGWT…EVDL), and 870-900 (DGVT…ELLQ).

In terms of assembly, interacts (via BRCT domains) with RAD18 (via C-terminus and phosphorylated form); this interaction is required for efficient repair of UV-induced DNA damage. Interacts (via N-terminus) with SLF2; this interaction links RAD18 to the SMC5-SMC6 complex. Interacts (via BRCT domains) with RAD18; this interaction occurs in a SLF2-independent manner. Interacts with SMC6. As to expression, widely expressed. Expressed in testis. Expressed in spermatocytes.

Its subcellular location is the nucleus. It is found in the cytoplasm. It localises to the cytoskeleton. The protein localises to the microtubule organizing center. The protein resides in the centrosome. Its function is as follows. Plays a role in the DNA damage response (DDR) pathway by regulating postreplication repair of UV-damaged DNA and genomic stability maintenance. The SLF1-SLF2 complex acts to link RAD18 with the SMC5-SMC6 complex at replication-coupled interstrand cross-links (ICL) and DNA double-strand breaks (DSBs) sites on chromatin during DNA repair in response to stalled replication forks. Promotes the recruitment of SLF2 and the SMC5-SMC6 complex to DNA lesions. The sequence is that of SMC5-SMC6 complex localization factor protein 1 from Mus musculus (Mouse).